Consider the following 196-residue polypeptide: Orotate phosphoribosyltransferase (196 aa).

117 to 125 (EDIVTTGLS) provides a ligand contact to 5-phospho-alpha-D-ribose 1-diphosphate. Residues T121 and R149 each coordinate orotate.

It belongs to the purine/pyrimidine phosphoribosyltransferase family. PyrE subfamily. Homodimer. Mg(2+) is required as a cofactor.

It carries out the reaction orotidine 5'-phosphate + diphosphate = orotate + 5-phospho-alpha-D-ribose 1-diphosphate. It participates in pyrimidine metabolism; UMP biosynthesis via de novo pathway; UMP from orotate: step 1/2. In terms of biological role, catalyzes the transfer of a ribosyl phosphate group from 5-phosphoribose 1-diphosphate to orotate, leading to the formation of orotidine monophosphate (OMP). The polypeptide is Orotate phosphoribosyltransferase (Methylorubrum populi (strain ATCC BAA-705 / NCIMB 13946 / BJ001) (Methylobacterium populi)).